Here is a 345-residue protein sequence, read N- to C-terminus: uncharacterized protein (345 aa).

The next 2 helical transmembrane spans lie at 23 to 43 (VVGF…YSYV) and 56 to 76 (FLIA…FVAL). Positions 326–345 (VTEPTTNSKRKPVKAKKAKK) are disordered. A compositionally biased stretch (basic residues) spans 333–345 (SKRKPVKAKKAKK).

Its subcellular location is the cell membrane. This is an uncharacterized protein from Mycoplasma pneumoniae (strain ATCC 29342 / M129 / Subtype 1) (Mycoplasmoides pneumoniae).